Consider the following 319-residue polypeptide: Protein SODIUM POTASSIUM ROOT DEFECTIVE 1 (319 aa).

Polar residues predominate over residues 1–13 (MLCASQASTTTLC). 2 disordered regions span residues 1–113 (MLCA…TPQG) and 191–248 (SPDN…NSSS). Residues 14–27 (STMDQTSQPSSSSS) show a composition bias toward low complexity. Basic and acidic residues predominate over residues 36 to 49 (AIDRHNPIIRDGRR). Residues 58 to 67 (LNPSSSSSST) are compositionally biased toward low complexity. 2 stretches are compositionally biased toward polar residues: residues 104 to 113 (SCFSSDTPQG) and 200 to 210 (TKASPTASLSS). Residues 224–242 (SPPPPPPPSPPQSSPPSPP) are compositionally biased toward pro residues. An HMA domain is found at 249–315 (DQVVVLRVSL…KVKNAQFWPE (67 aa)). Cys260 and Cys263 together coordinate Zn(2+).

Interacts with FT, but not with TSF (TWIN SISTER OF FT). Expressed in vascular tissues of cotyledons, rosette leaves and roots in developing seedlings before and during the floral transition. Expressed specifically in the phloem companion cells. Not detected in embryos or seeds. Not detected in the vegetative shoot apex.

Its subcellular location is the cytoplasm. It localises to the nucleus. It is found in the endoplasmic reticulum. Its function is as follows. Required for root meristem maintenance after germination. Involved in phloem translocation, starch accumulation and flowering. Promotes flowering in the photoperiod pathway. Regulates long-distance movement of FT from leaves to the shoot apex through the phloem stream. The sequence is that of Protein SODIUM POTASSIUM ROOT DEFECTIVE 1 from Arabidopsis thaliana (Mouse-ear cress).